The primary structure comprises 244 residues: Uridylate kinase (244 aa).

ATP is bound at residue 19–22 (KVSG). The tract at residues 27–32 (GERGFG) is involved in allosteric activation by GTP. Gly-61 is a UMP binding site. The ATP site is built by Gly-62 and Arg-66. Residues Asp-80 and 141–148 (IGSPFFTT) contribute to the UMP site. The ATP site is built by Thr-168, Gln-169, Tyr-174, and Asp-177.

The protein belongs to the UMP kinase family. As to quaternary structure, homohexamer.

Its subcellular location is the cytoplasm. It catalyses the reaction UMP + ATP = UDP + ADP. It functions in the pathway pyrimidine metabolism; CTP biosynthesis via de novo pathway; UDP from UMP (UMPK route): step 1/1. Its activity is regulated as follows. Allosterically activated by GTP. Inhibited by UTP. Its function is as follows. Catalyzes the reversible phosphorylation of UMP to UDP. This Anaplasma phagocytophilum (strain HZ) protein is Uridylate kinase.